The following is a 188-amino-acid chain: UPF0301 protein PD_1276 (188 aa).

This sequence belongs to the UPF0301 (AlgH) family.

The polypeptide is UPF0301 protein PD_1276 (Xylella fastidiosa (strain Temecula1 / ATCC 700964)).